A 148-amino-acid polypeptide reads, in one-letter code: UPF0178 protein lpl0088 (148 aa).

It belongs to the UPF0178 family.

This Legionella pneumophila (strain Lens) protein is UPF0178 protein lpl0088.